The sequence spans 468 residues: MSNGKITQVIGPVIDVEFEAGELPEIYYALKVSNPSLGDEPWNLVAEVAQHLGENTVRAIAMDSTDGLVRGQEVLNTGRQISVPVGRGTLGRILNVIGEPVDEQGPVETDTTWEIHRPTPEFVDQSTKVEAFETGIKVVDLLAPYARGGKIGLFGGAGVGKTVLIMELIHNIAKKHGGFSVFAGVGERTREGNDLWNEMKESNVLDKTALVYGQMNEPPGARARVALSALTVAEYFRDQENQDVLLFVDNIFRFTQAGSEVSALLGRIPSAVGYQPTLSTEMGELQERITTTKHGSITSVQAIYVPADDLTDPAPATTFAHLDATTVLSRQIAELGIYPAVDPLDSSSRILDPQVLGEEHYQVARDVQYVLQRYKDLQDIIAILGMDELSEEDKQTVSRARKIQRFLSQPFHVAEIFTGTPGKYVELSETIRGFKEIVEGKHDSVPEQAFYMAGGIDEVLENAAKMAS.

155–162 (GGAGVGKT) contributes to the ATP binding site.

It belongs to the ATPase alpha/beta chains family. F-type ATPases have 2 components, CF(1) - the catalytic core - and CF(0) - the membrane proton channel. CF(1) has five subunits: alpha(3), beta(3), gamma(1), delta(1), epsilon(1). CF(0) has three main subunits: a(1), b(2) and c(9-12). The alpha and beta chains form an alternating ring which encloses part of the gamma chain. CF(1) is attached to CF(0) by a central stalk formed by the gamma and epsilon chains, while a peripheral stalk is formed by the delta and b chains.

The protein resides in the cell inner membrane. It catalyses the reaction ATP + H2O + 4 H(+)(in) = ADP + phosphate + 5 H(+)(out). Functionally, produces ATP from ADP in the presence of a proton gradient across the membrane. The catalytic sites are hosted primarily by the beta subunits. The sequence is that of ATP synthase subunit beta 3 from Syntrophotalea carbinolica (strain DSM 2380 / NBRC 103641 / GraBd1) (Pelobacter carbinolicus).